Consider the following 492-residue polypeptide: E3 ubiquitin-protein ligase TRIM35 (492 aa).

Residue M1 is modified to N-acetylmethionine. A phosphoserine mark is found at S4 and S8. Residues 21–61 (CAVCYDPFRDAVTLRCGHNFCRGCVSRCWEVQVSPTCPVCK) form an RING-type zinc finger. Residues 96-137 (RFSRVCRLHRGQLSLFCLEDKELLCCSCQADPRHQGHRVQPV) form a B box-type zinc finger. Residues C101, H104, C123, and H129 each coordinate Zn(2+). The stretch at 210–249 (AEETRQKQLLADEKMKQLTEETEVLAHEIERLQMEMKEDD) forms a coiled coil. The region spanning 283–486 (YLGSLQYRVW…LRICPLHISV (204 aa)) is the B30.2/SPRY domain.

In terms of assembly, interacts with PKM isoform M2, but not isoform M1; this interaction may compete with that between PKM and FGFR1, and hence reduces FGFR1-dependent tyrosine phosphorylation of PKM. Interacts with IRF7; this interaction promotes IRF7 proteasomal degradation. Interacts with TRAF3; this interaction promotes TRAF3 activation.

The protein localises to the cytoplasm. It localises to the nucleus. The catalysed reaction is S-ubiquitinyl-[E2 ubiquitin-conjugating enzyme]-L-cysteine + [acceptor protein]-L-lysine = [E2 ubiquitin-conjugating enzyme]-L-cysteine + N(6)-ubiquitinyl-[acceptor protein]-L-lysine.. Its pathway is protein modification; protein ubiquitination. E3 ubiquitin-protein ligase that participates in multiple biological processes including cell death, glucose metabolism, and in particular, the innate immune response. Mediates 'Lys-63'-linked polyubiquitination of TRAF3 thereby promoting type I interferon production via RIG-I signaling pathway. Can also catalyze 'Lys-48'-linked polyubiquitination and proteasomal degradation of viral proteins such as influenza virus PB2. Acts as a negative feedback regulator of TLR7- and TLR9-triggered signaling. Mechanistically, promotes the 'Lys-48'-linked ubiquitination of IRF7 and induces its degradation via a proteasome-dependent pathway. Reduces FGFR1-dependent tyrosine phosphorylation of PKM, inhibiting PKM-dependent lactate production, glucose metabolism, and cell growth. The polypeptide is E3 ubiquitin-protein ligase TRIM35 (TRIM35) (Pongo abelii (Sumatran orangutan)).